The chain runs to 126 residues: Small ribosomal subunit protein uS12m (126 aa).

Positions 1 to 11 (MATSNQMGANT) are enriched in polar residues. Residues 1 to 21 (MATSNQMGANTRSKKKKKNLK) form a disordered region. The segment covering 12–21 (RSKKKKKNLK) has biased composition (basic residues).

The protein belongs to the universal ribosomal protein uS12 family.

It is found in the mitochondrion. Its function is as follows. Protein S12 is involved in the translation initiation step. This is Small ribosomal subunit protein uS12m (RPS12) from Bigelowiella natans (Pedinomonas minutissima).